The sequence spans 220 residues: UPF0441 protein Spro_4274 (220 aa).

Residues 181–220 form a disordered region; that stretch reads MAPKPAVTNTVTRGGFGESVAKQTSMQRSSATSSSRSMGG. Over residues 203–220 the composition is skewed to low complexity; it reads QTSMQRSSATSSSRSMGG.

This sequence belongs to the UPF0441 family.

In Serratia proteamaculans (strain 568), this protein is UPF0441 protein Spro_4274.